Reading from the N-terminus, the 326-residue chain is DNA-directed RNA polymerase subunit alpha (326 aa).

The segment at 1 to 232 is alpha N-terminal domain (alpha-NTD); the sequence is MQSATEFLKP…SQLSVFADLE (232 aa). The interval 246–326 is alpha C-terminal domain (alpha-CTD); it reads VDPLLLRPVD…NWPPAGLERP (81 aa).

Belongs to the RNA polymerase alpha chain family. In terms of assembly, homodimer. The RNAP catalytic core consists of 2 alpha, 1 beta, 1 beta' and 1 omega subunit. When a sigma factor is associated with the core the holoenzyme is formed, which can initiate transcription.

The catalysed reaction is RNA(n) + a ribonucleoside 5'-triphosphate = RNA(n+1) + diphosphate. Its function is as follows. DNA-dependent RNA polymerase catalyzes the transcription of DNA into RNA using the four ribonucleoside triphosphates as substrates. In Thiobacillus denitrificans (strain ATCC 25259 / T1), this protein is DNA-directed RNA polymerase subunit alpha.